Reading from the N-terminus, the 270-residue chain is MRFIPLQTEQQVSCWAAQHIINRINDFKPTAERPFVLGLPTGGTPLKTYQELIRLYQAGKVSFKHVVTFNMDEYVALPEEHPESYHSFMYNNFFNHIDILPENINILNGNTDDHNAECHRYEEKIKSYGKIHLFMGGVGVDGHIAFNEPASSLSSRTRIKTLTQDTLIANSRFFNNDVTQVPKYALTIGVGTLLDAEEVMILATGHQKALAVQAAVEGSINHLWTVSALQMHRHFVLVCDEAAQQELKVKTVKYFTELEGSVAGTDYQDK.

Aspartate 72 acts as the Proton acceptor; for enolization step in catalysis. The For ring-opening step role is filled by aspartate 141. Histidine 143 (proton acceptor; for ring-opening step) is an active-site residue. The active-site For ring-opening step is glutamate 148.

This sequence belongs to the glucosamine/galactosamine-6-phosphate isomerase family. NagB subfamily. Homohexamer.

It catalyses the reaction alpha-D-glucosamine 6-phosphate + H2O = beta-D-fructose 6-phosphate + NH4(+). It participates in amino-sugar metabolism; N-acetylneuraminate degradation; D-fructose 6-phosphate from N-acetylneuraminate: step 5/5. With respect to regulation, allosterically activated by N-acetylglucosamine 6-phosphate (GlcNAc6P). Its function is as follows. Catalyzes the reversible isomerization-deamination of glucosamine 6-phosphate (GlcN6P) to form fructose 6-phosphate (Fru6P) and ammonium ion. This is Glucosamine-6-phosphate deaminase from Haemophilus influenzae (strain 86-028NP).